A 384-amino-acid chain; its full sequence is tRNA-specific 2-thiouridylase MnmA (384 aa).

Residues 21–28 (GMSGGVDS) and Met47 contribute to the ATP site. The segment at 107–109 (NPD) is interaction with target base in tRNA. Residue Cys112 is the Nucleophile of the active site. Cys112 and Cys208 form a disulfide bridge. Gly136 serves as a coordination point for ATP. The segment at 158-160 (KDQ) is interaction with tRNA. Cys208 serves as the catalytic Cysteine persulfide intermediate. The tract at residues 320–321 (RY) is interaction with tRNA.

It belongs to the MnmA/TRMU family.

The protein resides in the cytoplasm. It catalyses the reaction S-sulfanyl-L-cysteinyl-[protein] + uridine(34) in tRNA + AH2 + ATP = 2-thiouridine(34) in tRNA + L-cysteinyl-[protein] + A + AMP + diphosphate + H(+). Catalyzes the 2-thiolation of uridine at the wobble position (U34) of tRNA, leading to the formation of s(2)U34. The sequence is that of tRNA-specific 2-thiouridylase MnmA from Chromohalobacter salexigens (strain ATCC BAA-138 / DSM 3043 / CIP 106854 / NCIMB 13768 / 1H11).